We begin with the raw amino-acid sequence, 886 residues long: Vam6/Vps39-like protein (886 aa).

The CNH domain maps to 15 to 294; it reads PLQIDCLAAW…RFITSGGSNI (280 aa). The stretch at 573-750 is one CHCR repeat; the sequence is FTEDLPEVES…LLRMYLSPPS (178 aa).

The protein belongs to the VAM6/VPS39 family. In terms of assembly, homooligomer. Interacts with TGFBR2 and, less efficiently, with TGFBR1; interaction with TGFBR2 is independent of the receptor kinase activity and of the presence of TGF-beta. Also interacts with ACVR2B, but not with BMPR2. Interacts with SMAD4, preferentially following TGF-beta treatment. Component of the putative homotypic fusion and vacuole protein sorting (HOPS) complex; the core of which composed of the class C Vps proteins VPS11, VPS16, VPS18 and VPS33A, is associated with VPS39 and VPS41. Interacts with PLEKHM2; involved in VPS39 recruitment to ARL8B-containing lysosomes. Associates with adapter protein complex 3 (AP-3) and clathrin:AP-3 complexes. Interacts with STX17; this interaction is increased in the absence of TMEM39A. Interacts with RAB7, RAB2A and RAB2B. Interacts with RAB2A (GTP-bound); the interaction contributes to obtaining a functional HOPS complex that promotes autophagosome-lysosome membrane fusion driven by STX17-SNAP29-VAMP8. Interacts with RAB39A (GTP-bound) and RAB39B (GTP-bound); interaction with RAB39A contributes to obtaining a functional HOPS complex.

Its subcellular location is the cytoplasm. The protein localises to the lysosome membrane. It localises to the late endosome membrane. Its function is as follows. Regulator of TGF-beta/activin signaling, inhibiting SMAD3- and activating SMAD2-dependent transcription. Acts by interfering with SMAD3/SMAD4 complex formation, this would lead to inhibition of SMAD3-dependent transcription and relieve SMAD3 inhibition of SMAD2-dependent promoters, thus increasing SMAD2-dependent transcription. In terms of biological role, plays a role in vesicle-mediated protein trafficking to lysosomal compartments including the endocytic membrane transport and autophagic pathways. Acts as a component of the HOPS endosomal tethering complex which is proposed to be involved in the Rab5-to-Rab7 endosome conversion probably implicating MON1A/B, and via binding SNAREs and SNARE complexes to mediate tethering and docking events during SNARE-mediated membrane fusion. The HOPS complex is proposed to be recruited to Rab7 on the late endosomal membrane and to regulate late endocytic, phagocytic and autophagic traffic towards lysosomes. Involved in homotypic vesicle fusions between late endosomes and in heterotypic fusions between late endosomes and lysosomes. Required for fusion of endosomes and autophagosomes with lysosomes. This Mus musculus (Mouse) protein is Vam6/Vps39-like protein.